A 618-amino-acid chain; its full sequence is 1-deoxy-D-xylulose-5-phosphate synthase (618 aa).

Residues histidine 70 and 111–113 each bind thiamine diphosphate; that span reads GHS. Aspartate 142 is a binding site for Mg(2+). Thiamine diphosphate is bound by residues 143 to 144, asparagine 171, tyrosine 278, and glutamate 360; that span reads GS. Residue asparagine 171 participates in Mg(2+) binding.

The protein belongs to the transketolase family. DXPS subfamily. Homodimer. The cofactor is Mg(2+). Requires thiamine diphosphate as cofactor.

It carries out the reaction D-glyceraldehyde 3-phosphate + pyruvate + H(+) = 1-deoxy-D-xylulose 5-phosphate + CO2. Its pathway is metabolic intermediate biosynthesis; 1-deoxy-D-xylulose 5-phosphate biosynthesis; 1-deoxy-D-xylulose 5-phosphate from D-glyceraldehyde 3-phosphate and pyruvate: step 1/1. Its function is as follows. Catalyzes the acyloin condensation reaction between C atoms 2 and 3 of pyruvate and glyceraldehyde 3-phosphate to yield 1-deoxy-D-xylulose-5-phosphate (DXP). The polypeptide is 1-deoxy-D-xylulose-5-phosphate synthase (Helicobacter pylori (strain G27)).